We begin with the raw amino-acid sequence, 409 residues long: Arginine deiminase (409 aa).

The Amidino-cysteine intermediate role is filled by Cys399.

The protein belongs to the arginine deiminase family.

Its subcellular location is the cytoplasm. The enzyme catalyses L-arginine + H2O = L-citrulline + NH4(+). It participates in amino-acid degradation; L-arginine degradation via ADI pathway; carbamoyl phosphate from L-arginine: step 1/2. The polypeptide is Arginine deiminase (Borreliella afzelii (strain PKo) (Borrelia afzelii)).